The chain runs to 88 residues: Large ribosomal subunit protein eL31 (88 aa).

It belongs to the eukaryotic ribosomal protein eL31 family.

In Archaeoglobus fulgidus (strain ATCC 49558 / DSM 4304 / JCM 9628 / NBRC 100126 / VC-16), this protein is Large ribosomal subunit protein eL31 (rpl31e).